A 186-amino-acid chain; its full sequence is MSSLGNLTVLTGPSGVGKGTIVRKILESHSDVWLSISATTRQPRSGEIDGEHYFFLEKKQFQEIIDKDGFLEWASFSNNFYGTPKKIVKEKIEKGTNVLLEIELEGARQIRKSFPEAFQIFLAPPNLYELEKRIRGRGTETEESIRDRLSIAEKELIAQKEFDAVVINEDIEKAFKEIEGFMGLKL.

The region spanning 5–183 (GNLTVLTGPS…AFKEIEGFMG (179 aa)) is the Guanylate kinase-like domain. 12 to 19 (GPSGVGKG) is a binding site for ATP.

This sequence belongs to the guanylate kinase family.

The protein resides in the cytoplasm. It carries out the reaction GMP + ATP = GDP + ADP. Functionally, essential for recycling GMP and indirectly, cGMP. This chain is Guanylate kinase, found in Prochlorococcus marinus (strain NATL2A).